The primary structure comprises 747 residues: Eukaryotic translation initiation factor 3 subunit B (747 aa).

The RRM domain maps to 42–128 (AFVVVDGLPE…HTLRVNKLTD (87 aa)). 5 WD repeats span residues 195-234 (DRQHWTETFVQWSPLGTYLTSVHAQGVQLWGGPSWTRQRR), 236-292 (AHPF…PLRS), 310-349 (APKFPWPAFKWSADDKYVARLNPGQSISVYELPRMNLLDK), 520-563 (LEKK…EKPE), and 578-623 (ADHY…LREE).

This sequence belongs to the eIF-3 subunit B family. In terms of assembly, component of the eukaryotic translation initiation factor 3 (eIF-3) complex.

The protein resides in the cytoplasm. RNA-binding component of the eukaryotic translation initiation factor 3 (eIF-3) complex, which is involved in protein synthesis of a specialized repertoire of mRNAs and, together with other initiation factors, stimulates binding of mRNA and methionyl-tRNAi to the 40S ribosome. The eIF-3 complex specifically targets and initiates translation of a subset of mRNAs involved in cell proliferation. In Neurospora crassa (strain ATCC 24698 / 74-OR23-1A / CBS 708.71 / DSM 1257 / FGSC 987), this protein is Eukaryotic translation initiation factor 3 subunit B (prt-1).